Reading from the N-terminus, the 753-residue chain is Probable phosphoenolpyruvate synthase (753 aa).

His-398 (tele-phosphohistidine intermediate) is an active-site residue. Substrate-binding residues include Arg-488, Arg-535, Glu-631, Gly-653, Thr-654, Asn-655, and Asp-656. Position 631 (Glu-631) interacts with Mg(2+). Position 656 (Asp-656) interacts with Mg(2+). Residue Cys-703 is the Proton donor of the active site.

Belongs to the PEP-utilizing enzyme family. The cofactor is Mg(2+).

The catalysed reaction is pyruvate + ATP + H2O = phosphoenolpyruvate + AMP + phosphate + 2 H(+). It functions in the pathway carbohydrate biosynthesis; gluconeogenesis. Functionally, catalyzes the phosphorylation of pyruvate to phosphoenolpyruvate. This is Probable phosphoenolpyruvate synthase (ppsA) from Archaeoglobus fulgidus (strain ATCC 49558 / DSM 4304 / JCM 9628 / NBRC 100126 / VC-16).